The primary structure comprises 342 residues: Probable transposase for insertion-like sequence element IS1161 (342 aa).

The 161-residue stretch at 182–342 (IEERPEEINN…KKLFELTQTA (161 aa)) folds into the Integrase catalytic domain.

Belongs to the transposase IS30 family.

Its function is as follows. Required for the transposition of the insertion element. The protein is Probable transposase for insertion-like sequence element IS1161 of Streptococcus salivarius.